A 232-amino-acid polypeptide reads, in one-letter code: Ribose-5-phosphate isomerase A (232 aa).

Substrate-binding positions include 34–37 (TGST), 89–92 (DGAD), and 102–105 (KGGG). The active-site Proton acceptor is glutamate 111. Residue lysine 129 coordinates substrate.

The protein belongs to the ribose 5-phosphate isomerase family. Homodimer.

It catalyses the reaction aldehydo-D-ribose 5-phosphate = D-ribulose 5-phosphate. It participates in carbohydrate degradation; pentose phosphate pathway; D-ribose 5-phosphate from D-ribulose 5-phosphate (non-oxidative stage): step 1/1. Functionally, catalyzes the reversible conversion of ribose-5-phosphate to ribulose 5-phosphate. The polypeptide is Ribose-5-phosphate isomerase A (Protochlamydia amoebophila (strain UWE25)).